Consider the following 64-residue polypeptide: Temporin-ALg (64 aa).

The signal sequence occupies residues methionine 1 to cysteine 22. Positions glutamate 23 to arginine 46 are excised as a propeptide. At leucine 62 the chain carries Leucine amide.

Belongs to the frog skin active peptide (FSAP) family. Temporin subfamily. As to expression, expressed by the skin glands.

Its subcellular location is the secreted. In terms of biological role, antimicrobial peptide with activity against Gram-positive and Gram-negative bacteria and against fungi. Has been tested against S.aureus (MIC=2.5 ug/mL), B.pumilus (MIC=2.5 ug/mL), B.cereus (MIC=30.0 ug/mL), E.coli (MIC=5.0 ug/mL), B.dysenteriae (MIC=10.0 ug/mL), A.cacoaceticus (MIC=30.0 ug/mL), P.aeruginosa (MIC=7.5 ug/mL) and C.albicans (MIC=1.25 ug/mL). Also shows a weak hemolytic activity. The sequence is that of Temporin-ALg from Amolops loloensis (Lolokou Sucker Frog).